Reading from the N-terminus, the 99-residue chain is Nucleoid-associated protein UUR10_0100 (99 aa).

It belongs to the YbaB/EbfC family. As to quaternary structure, homodimer.

It localises to the cytoplasm. The protein localises to the nucleoid. Functionally, binds to DNA and alters its conformation. May be involved in regulation of gene expression, nucleoid organization and DNA protection. The polypeptide is Nucleoid-associated protein UUR10_0100 (Ureaplasma urealyticum serovar 10 (strain ATCC 33699 / Western)).